The sequence spans 247 residues: Probable dihydroorotate dehydrogenase B (NAD(+)), electron transfer subunit (247 aa).

Positions 1 to 87 (MLRRVSIEET…RGPYGHGFSG (87 aa)) constitute an FAD-binding FR-type domain. The [2Fe-2S] cluster site is built by Cys201, Cys206, Cys209, and Cys217.

The protein belongs to the PyrK family. In terms of assembly, heterotetramer of 2 PyrK and 2 PyrD type B subunits. [2Fe-2S] cluster is required as a cofactor. Requires FAD as cofactor.

Its pathway is pyrimidine metabolism; UMP biosynthesis via de novo pathway; orotate from (S)-dihydroorotate (NAD(+) route): step 1/1. Functionally, responsible for channeling the electrons from the oxidation of dihydroorotate from the FMN redox center in the PyrD type B subunit to the ultimate electron acceptor NAD(+). The polypeptide is Probable dihydroorotate dehydrogenase B (NAD(+)), electron transfer subunit (Pyrococcus furiosus (strain ATCC 43587 / DSM 3638 / JCM 8422 / Vc1)).